The sequence spans 181 residues: ATP-dependent protease subunit HslV (181 aa).

The active site involves T11. Positions 166, 169, and 172 each coordinate Na(+).

This sequence belongs to the peptidase T1B family. HslV subfamily. As to quaternary structure, a double ring-shaped homohexamer of HslV is capped on each side by a ring-shaped HslU homohexamer. The assembly of the HslU/HslV complex is dependent on binding of ATP.

It localises to the cytoplasm. It catalyses the reaction ATP-dependent cleavage of peptide bonds with broad specificity.. Its activity is regulated as follows. Allosterically activated by HslU binding. Its function is as follows. Protease subunit of a proteasome-like degradation complex believed to be a general protein degrading machinery. The sequence is that of ATP-dependent protease subunit HslV from Chlorobaculum parvum (strain DSM 263 / NCIMB 8327) (Chlorobium vibrioforme subsp. thiosulfatophilum).